The chain runs to 666 residues: DNA mismatch repair protein MutL (666 aa).

The protein belongs to the DNA mismatch repair MutL/HexB family.

In terms of biological role, this protein is involved in the repair of mismatches in DNA. It is required for dam-dependent methyl-directed DNA mismatch repair. May act as a 'molecular matchmaker', a protein that promotes the formation of a stable complex between two or more DNA-binding proteins in an ATP-dependent manner without itself being part of a final effector complex. This chain is DNA mismatch repair protein MutL, found in Clostridium botulinum (strain Okra / Type B1).